Consider the following 47-residue polypeptide: Defensin-like protein 2 (47 aa).

Disulfide bonds link Cys-5/Cys-47, Cys-16/Cys-36, Cys-22/Cys-43, and Cys-26/Cys-45.

The protein belongs to the DEFL family.

In terms of biological role, fabatins have antibacterial activity against Gram-positive and Gram-negative bacteria. High activity against P.aeruginosa. No activity against S.cerevisiae and C.albicans. This chain is Defensin-like protein 2, found in Vicia faba (Broad bean).